The following is a 384-amino-acid chain: N-acetyldiaminopimelate deacetylase (384 aa).

The active site involves D74. E133 acts as the Proton acceptor in catalysis.

The protein belongs to the peptidase M20A family. N-acetyldiaminopimelate deacetylase subfamily.

The catalysed reaction is N-acetyl-(2S,6S)-2,6-diaminopimelate + H2O = (2S,6S)-2,6-diaminopimelate + acetate. It functions in the pathway amino-acid biosynthesis; L-lysine biosynthesis via DAP pathway; LL-2,6-diaminopimelate from (S)-tetrahydrodipicolinate (acetylase route): step 3/3. Functionally, catalyzes the conversion of N-acetyl-diaminopimelate to diaminopimelate and acetate. This chain is N-acetyldiaminopimelate deacetylase, found in Lactiplantibacillus plantarum (strain ATCC BAA-793 / NCIMB 8826 / WCFS1) (Lactobacillus plantarum).